Consider the following 111-residue polypeptide: Probable 4-amino-4-deoxy-L-arabinose-phosphoundecaprenol flippase subunit ArnE (111 aa).

Residues 1 to 35 (MIWLTLVFASLLSVAGQLCQKQATCFVAISKRRKH) lie on the Cytoplasmic side of the membrane. A helical membrane pass occupies residues 36-56 (IVLWLGLALACLGLAMVLWLL). An EamA domain is found at 40–109 (LGLALACLGL…IIGGIVILGS (70 aa)). Residues 57 to 60 (VLQN) are Periplasmic-facing. Residues 61–81 (VPVGIAYPMLSLNFVWVTLAA) form a helical membrane-spanning segment. Over 82–87 (VKLWHE) the chain is Cytoplasmic. A helical transmembrane segment spans residues 88-108 (PVSPRHWCGVAFIIGGIVILG). Topologically, residues 109–111 (STV) are periplasmic.

The protein belongs to the ArnE family. Heterodimer of ArnE and ArnF.

The protein resides in the cell inner membrane. The protein operates within bacterial outer membrane biogenesis; lipopolysaccharide biosynthesis. Functionally, translocates 4-amino-4-deoxy-L-arabinose-phosphoundecaprenol (alpha-L-Ara4N-phosphoundecaprenol) from the cytoplasmic to the periplasmic side of the inner membrane. This is Probable 4-amino-4-deoxy-L-arabinose-phosphoundecaprenol flippase subunit ArnE from Escherichia coli O157:H7.